Reading from the N-terminus, the 871-residue chain is Scavenger receptor class F member 2 (871 aa).

Positions 1–20 are disordered; the sequence is MEGAGPRGAGPARRRGAGGP. A signal peptide spans 1 to 43; that stretch reads MEGAGPRGAGPARRRGAGGPPSPLLPSLLLLLLLWMLPDTVAP. Residues 44–441 are Extracellular-facing; sequence QELNPRGRNV…ACHLETNQRK (398 aa). EGF-like domains are found at residues 71–110, 122–153, 148–182, 183–212, 213–241, and 236–270; these read QGDE…ANCD, CKEL…ARCE, WGAR…AQCA, SACY…RSCN, NQCA…ARCD, and FGAR…KYCR. Intrachain disulfides connect cysteine 75-cysteine 86, cysteine 80-cysteine 98, cysteine 100-cysteine 109, cysteine 126-cysteine 134, cysteine 128-cysteine 141, cysteine 143-cysteine 152, cysteine 156-cysteine 163, cysteine 158-cysteine 170, cysteine 172-cysteine 181, cysteine 185-cysteine 193, cysteine 187-cysteine 200, cysteine 202-cysteine 211, cysteine 215-cysteine 222, cysteine 217-cysteine 229, cysteine 231-cysteine 240, cysteine 244-cysteine 251, cysteine 246-cysteine 258, and cysteine 260-cysteine 269. A glycan (N-linked (GlcNAc...) asparagine) is linked at asparagine 83. Residues asparagine 310 and asparagine 365 are each glycosylated (N-linked (GlcNAc...) asparagine). An EGF-like 7 domain is found at 372 to 403; sequence CAFVCADCGSGHCDFQSGRCLCSPGVHGPHCN. 3 cysteine pairs are disulfide-bonded: cysteine 376-cysteine 384, cysteine 379-cysteine 391, and cysteine 393-cysteine 402. N-linked (GlcNAc...) asparagine glycosylation occurs at asparagine 403. Residues 442 to 462 traverse the membrane as a helical segment; the sequence is GVMGAGALLVLLVCLLLSLLG. At 463-871 the chain is on the cytoplasmic side; sequence CCCACRGKDP…ELGRAGAPTL (409 aa). Position 551 is a phosphoserine (serine 551). Over residues 570–579 the composition is skewed to basic and acidic residues; the sequence is EAPAESRDPE. The tract at residues 570–871 is disordered; sequence EAPAESRDPE…ELGRAGAPTL (302 aa). A Phosphoserine modification is found at serine 613. Tyrosine 628 bears the Phosphotyrosine mark. Positions 632 to 643 are enriched in basic and acidic residues; that stretch reads ARREARPARARG. A phosphoserine mark is found at serine 651, serine 653, serine 710, serine 718, and serine 742. Over residues 705–725 the composition is skewed to basic and acidic residues; the sequence is TPSDKSAHTVEHGSPRTRDPT. The segment covering 821–831 has biased composition (low complexity); the sequence is PPATETPGPEK. Positions 844 to 856 are enriched in basic residues; it reads KKTPIQKPPRKKS. Over residues 861–871 the composition is skewed to low complexity; the sequence is GELGRAGAPTL.

Homophilic and heterophilic interaction via its extracellular domain. Interacts with SCARF1. The heterophilic interaction with SCARF1, which is stronger than the homophilic interaction with itself, is suppressed by the presence of SCARF1 ligand such as Ac-LDL. As to expression, predominantly expressed in endothelial cells. Expressed in heart, placenta, lung, kidney, spleen, small intestine and ovary.

The protein resides in the membrane. Functionally, probable adhesion protein, which mediates homophilic and heterophilic interactions. In contrast to SCARF1, it poorly mediates the binding and degradation of acetylated low density lipoprotein (Ac-LDL). This Homo sapiens (Human) protein is Scavenger receptor class F member 2 (SCARF2).